A 1493-amino-acid chain; its full sequence is DNA excision repair protein ERCC-6 (1493 aa).

Positions 1–39 are disordered; that stretch reads MPNEGIPHSSQTQEQDCLQSQPVSNNEEMAIKQESGGDG. Positions 1–510 are N-terminal domain; essential for its chromatin remodeling activity; it reads MPNEGIPHSS…GFLFKKLFKY (510 aa). A compositionally biased stretch (polar residues) spans 8 to 27; that stretch reads HSSQTQEQDCLQSQPVSNNE. Ser10 bears the Phosphoserine; by ATM mark. Residue Ser158 is modified to Phosphoserine; by CDK2. Lys170 carries the post-translational modification N6-methylated lysine; by EHMT2. A Glycyl lysine isopeptide (Lys-Gly) (interchain with G-Cter in SUMO3) cross-link involves residue Lys205. A Glycyl lysine isopeptide (Lys-Gly) (interchain with G-Cter in SUMO2) cross-link involves residue Lys255. Disordered stretches follow at residues 287 to 323 and 344 to 453; these read KQGCNKRAARKAPAPVTPPAPVQNKNKPNKKARVLSK and GKVG…GRYR. N6-methylated lysine; by EHMT2 is present on Lys297. The span at 353–363 shows a compositional bias: basic and acidic residues; sequence RPWESDMRPEA. Over residues 364-392 the composition is skewed to acidic residues; that stretch reads EGDSEGEESEYFPTEEEEEEEDDEVEGAE. 2 positions are modified to phosphoserine: Ser429 and Ser430. Lys448 carries the post-translational modification N6-methylated lysine; by EHMT2. A phosphoserine mark is found at Ser486 and Ser489. In terms of domain architecture, Helicase ATP-binding spans 519 to 695; that stretch reads WELHCQQAGG…WSLFDFIFPG (177 aa). 532–539 lines the ATP pocket; that stretch reads DEMGLGKT. Residues 646 to 649 carry the DEAH box motif; it reads DEGH. The region spanning 843 to 1002 is the Helicase C-terminal domain; the sequence is VVESLLKIWH…RRFFKSNDLY (160 aa). 3 disordered regions span residues 1042 to 1147, 1181 to 1247, and 1318 to 1384; these read PAFG…DESI, HKSK…EQSN, and RGIS…SGPL. The residue at position 1054 (Lys1054) is an N6-methylated lysine; by EHMT2. Positions 1123–1141 are enriched in polar residues; that stretch reads ISGNGECSNSSGTGKTSMP. Ser1142 is subject to Phosphoserine. The segment covering 1200-1210 has biased composition (basic residues); it reads LRPKQKPKNSK. Composition is skewed to basic and acidic residues over residues 1211–1221 and 1232–1247; these read HCRDAKFEGTR and QKQDSENKSEAKEQSN. Basic residues predominate over residues 1327–1336; the sequence is KKSRFGKKRN. The segment covering 1337 to 1351 has biased composition (polar residues); sequence SNFSVQHPSSTSPTE. Residue Ser1348 is modified to Phosphoserine. The segment covering 1352 to 1376 has biased composition (basic and acidic residues); that stretch reads KCQDGIMKKEGKDNVPEHFSGRAED. Positions 1386–1398 match the CSA-interacting motif (CIM) motif; it reads SSSLLAKMRARNH. Residues 1400–1428 are ubiquitin-binding domain (UBD); sequence ILPERLESESGHLQEASALLPTTEHDDLL. The winged-helix domain (WHD) stretch occupies residues 1429 to 1493; sequence VEMRNFIAFQ…GIWKLKPEYC (65 aa). The segment at 1446–1493 is essential for its interaction with RNA polymerase II, transcription-coupled nucleotide excision repair activity, association with chromatin after UV irradiation and for mediating the UV-induced translocation of ERRC8 to the nuclear matrix; that stretch reads STREILQEFESKLSASQSCVFRELLRNLCTFHRTSGGEGIWKLKPEYC.

Belongs to the SNF2/RAD54 helicase family. In terms of assembly, homodimer. Binds DNA. Interacts with ERCC8. Interacts with RNA polymerase II; interaction is enhanced by UV irradiation. Component of the B-WICH complex, at least composed of SMARCA5/SNF2H, BAZ1B/WSTF, SF3B1, DEK, MYO1C, ERCC6, MYBBP1A and DDX21. Interacts with KIAA1530/UVSSA. Interacts with ELOA and CUL5; the interaction is induced by DNA damaging agents or by inhibitors of RNA polymerase II elongation. Interacts (via WHD region) with RIF1. Interacts with SMARCC2/BAF170, SMARCB1/BAF47 and the neuron-specific chromatin remodeling complex (nBAF complex). Interacts with ERCC5/XPG (via C-terminus); the interaction stimulates ERCC6/CSB binding to the DNA repair bubble and ERCC6/CSB ATPase activity. May form a complex composed of RNA polymerase II, ERCC6/CSB and ERCC5/XPG which associates with the DNA repair bubble during transcription-coupled nucleotide excision repair. Interacts with CAND1, CSTF1, DDX3X, DDX5, DDX17, DDX23, DHX36, HDAC1, HNRNPU, MTA2, PRPF3, PSMD3, RBBP4, SFPQ, SMARCA1, SMARCA2, TOP1, USP7, XRCC5, COPS3, COPS4, COPS6, DDX1, DDX41, GATAD2A, GATAD2B, PRPF4, PSMC5, SF3B2, CTR9, NONO, PSMD12 and TOP2A. Phosphorylated in a cell cycle-dependent manner at Ser-158 by cyclin A-CDK2 and at Ser-10 by ATM in response to DNA damage. Phosphorylation at these two sites promotes the intramolecular interaction of the N-terminal domain with the helicase ATP-binding domain, thereby probably releasing the inhibitory effect of the N-terminal domain on its ATPase activity. Phosphorylation is essential for its chromatin remodeling activity. In terms of processing, ubiquitinated at the C-terminus. Ubiquitination by the CSA complex leads to ERCC6 proteasomal degradation in a UV-dependent manner. Stabilized following interaction with KIAA1530/UVSSA, which promotes recruitment of deubiquitinating enzyme USP7, leading to deubiquitination of ERCC6 thereby preventing UV-induced degradation of ERCC6 by the proteasome. Post-translationally, sumoylation at Lys-205 in an UV-radiation-dependent manner is essential for its transcription-coupled nucleotide excision repair activity.

The protein localises to the nucleus. Its subcellular location is the chromosome. It carries out the reaction ATP + H2O = ADP + phosphate + H(+). In terms of biological role, essential factor involved in transcription-coupled nucleotide excision repair (TC-NER), a process during which RNA polymerase II-blocking lesions are rapidly removed from the transcribed strand of active genes. Plays a central role in the initiation of the TC-NER process: specifically recognizes and binds RNA polymerase II stalled at a lesion, and mediates recruitment of ERCC8/CSA, initiating DNA damage excision by TFIIH recruitment. Upon DNA-binding, it locally modifies DNA conformation by wrapping the DNA around itself, thereby modifying the interface between stalled RNA polymerase II and DNA. Acts as a chromatin remodeler at DSBs; DNA-dependent ATPase-dependent activity is essential for this function. Plays an important role in regulating the choice of the DNA double-strand breaks (DSBs) repair pathway and G2/M checkpoint activation; DNA-dependent ATPase activity is essential for this function. Regulates the DNA repair pathway choice by inhibiting non-homologous end joining (NHEJ), thereby promoting the homologous recombination (HR)-mediated repair of DSBs during the S/G2 phases of the cell cycle. Mediates the activation of the ATM- and CHEK2-dependent DNA damage responses thus preventing premature entry of cells into mitosis following the induction of DNA DSBs. Remodels chromatin by evicting histones from chromatin flanking DSBs, limiting RIF1 accumulation at DSBs thereby promoting BRCA1-mediated HR. Required for stable recruitment of ELOA and CUL5 to DNA damage sites. Also involved in UV-induced translocation of ERCC8 to the nuclear matrix. Essential for neuronal differentiation and neuritogenesis; regulates transcription and chromatin remodeling activities required during neurogenesis. The protein is DNA excision repair protein ERCC-6 of Homo sapiens (Human).